We begin with the raw amino-acid sequence, 401 residues long: cAMP-dependent protein kinase type II-alpha regulatory subunit (401 aa).

At Ser-2 the chain carries N-acetylserine. Positions Ser-2–Leu-135 are dimerization and phosphorylation. Phosphoserine is present on residues Ser-47, Ser-74, Ser-76, and Ser-96. The tract at residues Glu-61–Leu-83 is disordered. The span at Ile-68–Leu-83 shows a compositional bias: acidic residues. 3',5'-cyclic AMP contacts are provided by residues Leu-136–Pro-257, Glu-205, Arg-214, Leu-258–Gln-401, Glu-335, and Arg-344. At Thr-212 the chain carries Phosphothreonine; by PDPK1. Residues Ser-347 and Ser-392 each carry the phosphoserine modification.

Belongs to the cAMP-dependent kinase regulatory chain family. In terms of assembly, the inactive form of the enzyme is composed of two regulatory chains and two catalytic chains. Activation by cAMP produces two active catalytic monomers and a regulatory dimer that binds four cAMP molecules. Interacts with AKAP4. Interacts with CBFA2T3. Interacts with the phosphorylated form of PJA2. Interacts with MYRIP. This interaction may link PKA to components of the exocytosis machinery, thus facilitating exocytosis, including insulin release. Forms a complex composed of PRKAR2A, GSK3B and GSKIP through GSKIP interaction; facilitates PKA-induced phosphorylation and regulates GSK3B activity. Interacts with ADCY8; inhibits adenylate cyclase activity through PKA phosphorylation. In terms of processing, phosphorylated by the activated catalytic chain. As to expression, four types of regulatory chains are found: I-alpha, I-beta, II-alpha, and II-beta. Their expression varies among tissues and is in some cases constitutive and in others inducible.

The protein resides in the cytoplasm. Its subcellular location is the cell membrane. Its function is as follows. Regulatory subunit of the cAMP-dependent protein kinases involved in cAMP signaling in cells. Type II regulatory chains mediate membrane association by binding to anchoring proteins, including the MAP2 kinase. The chain is cAMP-dependent protein kinase type II-alpha regulatory subunit (Prkar2a) from Mus musculus (Mouse).